An 85-amino-acid polypeptide reads, in one-letter code: Progonadoliberin-2 (85 aa).

Positions 1 to 23 (MCVSRLALLLGLLLCVGAQLSFA) are cleaved as a signal peptide. At Q24 the chain carries Pyrrolidone carboxylic acid. G33 carries the glycine amide modification.

It belongs to the GnRH family. In terms of tissue distribution, expressed in only one cell group in the mesencephalon.

The protein resides in the secreted. Stimulates the secretion of gonadotropins. This is Progonadoliberin-2 (gnrh2) from Haplochromis burtoni (Burton's mouthbrooder).